Reading from the N-terminus, the 1188-residue chain is DNA polymerase (1188 aa).

Positions 1–74 are disordered; sequence MALVPSPRAG…PAANNVSLTP (74 aa). The segment covering 31-41 has biased composition (low complexity); it reads STAGAAPTATR.

This sequence belongs to the DNA polymerase type-B family. In terms of assembly, heterodimer with the terminal protein; this heterodimer binds to bp 9 to 18 of the genome. Forms a complex with viral pTP, DBP and hosts NFIA and POU2F1/OCT1 for initiation of replication.

Its subcellular location is the host nucleus. It catalyses the reaction DNA(n) + a 2'-deoxyribonucleoside 5'-triphosphate = DNA(n+1) + diphosphate. Its function is as follows. Eukaryotic-type DNA polymerase involved in viral genomic replication. DNA synthesis is protein primed, and acts in a strand displacement replication. Assembles in complex with viral pTP, DBP, host NFIA and host POU2F1/OCT1 on viral origin of replication. The polymerase covalently transfers dCMP onto pTP, thereby initiating complementary strand synthesis. This chain is DNA polymerase, found in Human adenovirus F serotype 40 (HAdV-40).